Here is a 575-residue protein sequence, read N- to C-terminus: MQPTAPPRRRLLPLLLPQLLLFGLMAEAEPATETPGSASVDTVFTARAGAPVFLPGPAARPDVRAVRGWSVLAGACSPPVPEPVCLDDRECFTDVALDAACLRTARVAPLAIAELAERPDSTGDKEFVLADPHVSAQLGRNATGVLIAAAAEEDGGVYFLYDRLIGDAGDEETQLALTLQVATAGAQGAARDEEREPATGPTPGPPPHRTTTRAPPRRHGARFRVLPYHSHVYTPGDSFLLSVRLQSEFFDEAPFSASIDWYFLRTAGDCALIRIYETCIFHPEAPACLHPADAQCSFASPYRSETVYSRLYEQCRPDPAGRWPHECEGAAYAAPVAHLRPANNSVDLVFDDAPAAASGLYVFVLQYNGHVEAWDYSLVVTSDRLVRAVTDHTRPEAAAADAPEPGPPLTSEPAGAPTGPAPWLVVLVGALGLAGLVGIAALAVRVCARRASQKRTYDILNPFGPVYTSLPTNEPLDVVVPVSDDEFSLDEDSFADDDSDDDGPASNPPADAYDLAGAPEPTSGFARAPANGTRSSRSGFKVWFRDPPEDDAAPARAPAAPDYTVVAARLKSILR.

The signal sequence occupies residues 1–26 (MQPTAPPRRRLLPLLLPQLLLFGLMA). Residues 27 to 423 (EAEPATETPG…AGAPTGPAPW (397 aa)) lie on the Virion surface side of the membrane. Residues 76–101 (CSPPVPEPVCLDDRECFTDVALDAAC) are interaction with gI. A glycan (N-linked (GlcNAc...) asparagine; by host) is linked at Asn-141. Residues 186-218 (AQGAARDEEREPATGPTPGPPPHRTTTRAPPRR) form a disordered region. Intrachain disulfides connect Cys-270–Cys-296, Cys-279–Cys-288, and Cys-315–Cys-327. The N-linked (GlcNAc...) asparagine; by host glycan is linked to Asn-343. Positions 394-416 (RPEAAAADAPEPGPPLTSEPAGA) are disordered. Residues 424–444 (LVVLVGALGLAGLVGIAALAV) traverse the membrane as a helical segment. Residues 445–575 (RVCARRASQK…VAARLKSILR (131 aa)) lie on the Intravirion side of the membrane. The short motif at 467–470 (YTSL) is the Internalization motif element. The tract at residues 484-502 (DDEFSLDEDSFADDDSDDD) is acidic. The span at 491-503 (EDSFADDDSDDDG) shows a compositional bias: acidic residues. The segment at 491-560 (EDSFADDDSD…DAAPARAPAA (70 aa)) is disordered.

Belongs to the alphaherpesvirinae glycoprotein E family. In terms of assembly, interacts with gI. Post-translationally, phosphorylated on serines within the acidic cluster. Phosphorylation determines whether endocytosed viral gE traffics to the trans-Golgi network or recycles to the cell membrane.

Its subcellular location is the virion membrane. The protein resides in the host cell membrane. It is found in the host cell junction. The protein localises to the host Golgi apparatus membrane. It localises to the host endosome membrane. Its function is as follows. In epithelial cells, the heterodimer gE/gI is required for the cell-to-cell spread of the virus, by sorting nascent virions to cell junctions. Once the virus reaches the cell junctions, virus particles can spread to adjacent cells extremely rapidly through interactions with cellular receptors that accumulate at these junctions. Implicated in basolateral spread in polarized cells. In neuronal cells, gE/gI is essential for the anterograde spread of the infection throughout the host nervous system. Together with US9, the heterodimer gE/gI is involved in the sorting and transport of viral structural components toward axon tips. The sequence is that of Envelope glycoprotein E (gE) from Bos taurus (Bovine).